The following is a 465-amino-acid chain: GTPase Der (465 aa).

EngA-type G domains are found at residues Pro-3–Ser-167 and Ile-179–Leu-352. GTP is bound by residues Gly-9–Ser-16, Asp-57–Met-61, Asn-119–Asp-122, Gly-185–Ser-192, Asp-232–Leu-236, and Asn-297–Asp-300. In terms of domain architecture, KH-like spans Arg-353–Asp-437.

The protein belongs to the TRAFAC class TrmE-Era-EngA-EngB-Septin-like GTPase superfamily. EngA (Der) GTPase family. Associates with the 50S ribosomal subunit.

In terms of biological role, GTPase that plays an essential role in the late steps of ribosome biogenesis. This Xylella fastidiosa (strain M23) protein is GTPase Der.